Here is a 612-residue protein sequence, read N- to C-terminus: Zinc metalloproteinase-disintegrin-like 2d (612 aa).

An N-terminal signal peptide occupies residues 1–20 (MIQVLLVTICLAVFPYQGSS). The propeptide occupies 21-189 (IILGSGNVND…KKASQLNLTP (169 aa)). In terms of domain architecture, Peptidase M12B spans 199 to 395 (KYIELVIVAD…NRPPCILNKP (197 aa)). Glu202 is a binding site for Ca(2+). N-linked (GlcNAc...) asparagine glycosylation is present at Asn218. Residue Asp286 participates in Ca(2+) binding. 3 cysteine pairs are disulfide-bonded: Cys310-Cys390, Cys350-Cys374, and Cys352-Cys357. His335 is a binding site for Zn(2+). Glu336 is an active-site residue. Zn(2+)-binding residues include His339 and His345. The Ca(2+) site is built by Cys390, Asn393, Val405, Asn408, Phe410, Glu412, Glu415, and Asp418. A Disintegrin domain is found at 403 to 489 (PPVCGNYFVE…DCPTDNFQRN (87 aa)). Intrachain disulfides connect Cys406–Cys435, Cys417–Cys430, Cys419–Cys425, Cys429–Cys452, Cys443–Cys449, Cys448–Cys474, Cys461–Cys481, Cys468–Cys500, Cys493–Cys505, Cys512–Cys562, Cys527–Cys573, Cys540–Cys550, Cys557–Cys599, and Cys593–Cys605. The short motif at 467-469 (ECD) is the D/ECD-tripeptide element.

Belongs to the venom metalloproteinase (M12B) family. P-III subfamily. It depends on Zn(2+) as a cofactor. Expressed by the venom gland.

The protein resides in the secreted. In terms of biological role, snake venom metalloproteinase that impairs hemostasis in the envenomed animal. This Crotalus adamanteus (Eastern diamondback rattlesnake) protein is Zinc metalloproteinase-disintegrin-like 2d.